Here is a 213-residue protein sequence, read N- to C-terminus: Orotate phosphoribosyltransferase (213 aa).

K26 contributes to the 5-phospho-alpha-D-ribose 1-diphosphate binding site. 34–35 (FF) provides a ligand contact to orotate. 5-phospho-alpha-D-ribose 1-diphosphate contacts are provided by residues 72–73 (YK), R99, K100, K103, H105, and 124–132 (DDVITAGTA). Positions 128 and 156 each coordinate orotate.

It belongs to the purine/pyrimidine phosphoribosyltransferase family. PyrE subfamily. Homodimer. Mg(2+) serves as cofactor.

The enzyme catalyses orotidine 5'-phosphate + diphosphate = orotate + 5-phospho-alpha-D-ribose 1-diphosphate. Its pathway is pyrimidine metabolism; UMP biosynthesis via de novo pathway; UMP from orotate: step 1/2. Catalyzes the transfer of a ribosyl phosphate group from 5-phosphoribose 1-diphosphate to orotate, leading to the formation of orotidine monophosphate (OMP). The polypeptide is Orotate phosphoribosyltransferase (Vibrio vulnificus (strain YJ016)).